The sequence spans 392 residues: Stilbene synthase 4 (392 aa).

55-58 (KFNR) provides a ligand contact to substrate. The active site involves cysteine 164. Substrate is bound by residues leucine 267 and 305–307 (GGP).

Belongs to the thiolase-like superfamily. Chalcone/stilbene synthases family. As to quaternary structure, homodimer.

The protein resides in the cytoplasm. It catalyses the reaction 4-coumaroyl-CoA + 3 malonyl-CoA + 3 H(+) = trans-resveratrol + 4 CO2 + 4 CoA. It functions in the pathway phytoalexin biosynthesis; 3,4',5-trihydroxystilbene biosynthesis; 3,4',5-trihydroxystilbene from trans-4-coumarate: step 2/2. In terms of biological role, mediates resistance to pathogens which are sensitive to stilbenes. This chain is Stilbene synthase 4, found in Vitis vinifera (Grape).